The sequence spans 298 residues: Mitochondrial glycine transporter (298 aa).

Solcar repeat units lie at residues 5-84 (TKTR…MRTA), 105-189 (LTTY…AKEV), and 211-295 (TSTL…LIKL). 6 helical membrane-spanning segments follow: residues 11 to 36 (LIGG…TRIQ), 59 to 85 (GTLP…RTAI), 111 to 136 (LISG…VRYE), 164 to 187 (GFGP…EKAK), 215 to 241 (VNST…KTRM), and 270 to 288 (GLSM…AWGI).

The protein belongs to the mitochondrial carrier (TC 2.A.29) family. SLC25A38 subfamily.

The protein localises to the mitochondrion inner membrane. The enzyme catalyses glycine(in) = glycine(out). Functionally, mitochondrial glycine transporter that imports glycine into the mitochondrial matrix. Plays an important role in providing glycine for the first enzymatic step in heme biosynthesis, the condensation of glycine with succinyl-CoA to produce 5-aminolevulinate (ALA) in the mitochondrial matrix. This chain is Mitochondrial glycine transporter, found in Vanderwaltozyma polyspora (strain ATCC 22028 / DSM 70294 / BCRC 21397 / CBS 2163 / NBRC 10782 / NRRL Y-8283 / UCD 57-17) (Kluyveromyces polysporus).